The sequence spans 128 residues: MQQTGLTLALVALAVCVALPSSEAILPIASSCCTEVSHHISRRLLERVNICRIQRADGDCDLAAVILHVRRRRLCVSPHSHVIKQWMKEQAAKKNTKGNICHKKQAGKRKSKGAHQEKPEIHSHKSPY.

An N-terminal signal peptide occupies residues 1–24 (MQQTGLTLALVALAVCVALPSSEA). Intrachain disulfides connect Cys-32/Cys-60 and Cys-33/Cys-75. Residues 89–128 (EQAAKKNTKGNICHKKQAGKRKSKGAHQEKPEIHSHKSPY) are disordered. The span at 94-113 (KNTKGNICHKKQAGKRKSKG) shows a compositional bias: basic residues. Residues 114–128 (AHQEKPEIHSHKSPY) show a composition bias toward basic and acidic residues.

This sequence belongs to the intercrine beta (chemokine CC) family.

It is found in the secreted. Functionally, chemotactic activity for resting CD4, CD8 T-cells and eosinophils. Binds to CCR3 and CCR10 and induces calcium mobilization in a dose-dependent manner. In Canis lupus familiaris (Dog), this protein is C-C motif chemokine 28 (CCL28).